Consider the following 228-residue polypeptide: UPF0173 metal-dependent hydrolase BcerKBAB4_4442 (228 aa).

It belongs to the UPF0173 family.

In Bacillus mycoides (strain KBAB4) (Bacillus weihenstephanensis), this protein is UPF0173 metal-dependent hydrolase BcerKBAB4_4442.